A 1420-amino-acid polypeptide reads, in one-letter code: Apolipoprotein(a) (1420 aa).

Over residues 19 to 30 (TAVAPPNVTPVP) the composition is skewed to low complexity. The disordered stretch occupies residues 19-46 (TAVAPPNVTPVPSLEAPSEQAPTEQRPG). 5 Kringle domains span residues 49–127 (ECYH…LTQC), 163–241 (ECYH…LTQC), 277–355 (ECYH…LTQC), 391–469 (ECYH…LTRC), and 505–583 (ECYY…LTQC). Disulfide bonds link cysteine 50–cysteine 127, cysteine 71–cysteine 110, cysteine 99–cysteine 122, cysteine 164–cysteine 241, cysteine 185–cysteine 224, cysteine 213–cysteine 236, cysteine 278–cysteine 355, cysteine 299–cysteine 338, cysteine 327–cysteine 350, cysteine 392–cysteine 469, cysteine 413–cysteine 452, cysteine 441–cysteine 464, cysteine 506–cysteine 583, cysteine 527–cysteine 566, and cysteine 555–cysteine 578. The interval 598 to 617 (PDPSTQASSEEAPTEQSPEV) is disordered. Over residues 600 to 616 (PSTQASSEEAPTEQSPE) the composition is skewed to polar residues. Kringle domains lie at 619 to 697 (DCYH…LTQC), 725 to 803 (DCYH…LTQC), 839 to 917 (DCYQ…LTQC), 953 to 1031 (DCYH…LTQC), and 1067 to 1145 (QCYH…LTRC). Disulfide bonds link cysteine 620–cysteine 697, cysteine 641–cysteine 680, cysteine 669–cysteine 692, cysteine 726–cysteine 803, cysteine 747–cysteine 786, cysteine 775–cysteine 798, cysteine 840–cysteine 917, cysteine 861–cysteine 900, cysteine 889–cysteine 912, cysteine 954–cysteine 1031, cysteine 975–cysteine 1014, cysteine 1003–cysteine 1026, cysteine 1068–cysteine 1145, cysteine 1089–cysteine 1128, cysteine 1117–cysteine 1140, cysteine 1217–cysteine 1233, cysteine 1309–cysteine 1376, cysteine 1339–cysteine 1355, and cysteine 1366–cysteine 1394. The region spanning 1191 to 1418 (IVGGCVAHPH…FVTWIEGVMR (228 aa)) is the Peptidase S1 domain.

This sequence belongs to the peptidase S1 family. Plasminogen subfamily. As to quaternary structure, disulfide-linked to apo-B100. Binds to fibronectin and decorin. In terms of processing, N- and O-glycosylated.

In terms of biological role, apo(a) is the main constituent of lipoprotein(a) (Lp(a)). It has serine proteinase activity and is able of autoproteolysis. Inhibits tissue-type plasminogen activator 1. Lp(a) may be a ligand for megalin/Gp 330. The polypeptide is Apolipoprotein(a) (LPA) (Macaca mulatta (Rhesus macaque)).